The chain runs to 345 residues: S-adenosylmethionine:tRNA ribosyltransferase-isomerase (345 aa).

This sequence belongs to the QueA family. Monomer.

It is found in the cytoplasm. It carries out the reaction 7-aminomethyl-7-carbaguanosine(34) in tRNA + S-adenosyl-L-methionine = epoxyqueuosine(34) in tRNA + adenine + L-methionine + 2 H(+). It functions in the pathway tRNA modification; tRNA-queuosine biosynthesis. Transfers and isomerizes the ribose moiety from AdoMet to the 7-aminomethyl group of 7-deazaguanine (preQ1-tRNA) to give epoxyqueuosine (oQ-tRNA). The chain is S-adenosylmethionine:tRNA ribosyltransferase-isomerase from Helicobacter pylori (strain G27).